Consider the following 233-residue polypeptide: Purine nucleoside phosphorylase DeoD-type (233 aa).

H4 contributes to the a purine D-ribonucleoside binding site. Residues G20, R24, R43, and 87–90 (RVGT) each bind phosphate. A purine D-ribonucleoside is bound by residues 178–180 (EME) and 202–203 (SD). Residue D203 is the Proton donor of the active site.

It belongs to the PNP/UDP phosphorylase family. In terms of assembly, homohexamer; trimer of homodimers.

The enzyme catalyses a purine D-ribonucleoside + phosphate = a purine nucleobase + alpha-D-ribose 1-phosphate. It carries out the reaction a purine 2'-deoxy-D-ribonucleoside + phosphate = a purine nucleobase + 2-deoxy-alpha-D-ribose 1-phosphate. Catalyzes the reversible phosphorolytic breakdown of the N-glycosidic bond in the beta-(deoxy)ribonucleoside molecules, with the formation of the corresponding free purine bases and pentose-1-phosphate. This is Purine nucleoside phosphorylase DeoD-type from Listeria innocua serovar 6a (strain ATCC BAA-680 / CLIP 11262).